The primary structure comprises 175 residues: Cell number regulator 9 (175 aa).

A run of 2 helical transmembrane segments spans residues 53-73 (GLCC…AEIV) and 80-100 (CGVA…HWIY).

The protein belongs to the cornifelin family. Expressed in roots, coleoptiles, leaves and stalks.

It localises to the membrane. This chain is Cell number regulator 9 (CNR9), found in Zea mays (Maize).